The primary structure comprises 315 residues: Malate dehydrogenase (315 aa).

NAD(+) is bound by residues 11–16 (GAGHVG) and D35. 2 residues coordinate substrate: R84 and R90. NAD(+) is bound by residues N97 and 120 to 122 (VTN). Substrate contacts are provided by N122 and R153. Catalysis depends on H177, which acts as the Proton acceptor.

The protein belongs to the LDH/MDH superfamily. MDH type 3 family.

The enzyme catalyses (S)-malate + NAD(+) = oxaloacetate + NADH + H(+). Catalyzes the reversible oxidation of malate to oxaloacetate. The protein is Malate dehydrogenase of Thermosulfidibacter takaii (strain DSM 17441 / JCM 13301 / NBRC 103674 / ABI70S6).